A 745-amino-acid chain; its full sequence is 5-methyltetrahydropteroyltriglutamate--homocysteine methyltransferase (745 aa).

5-methyltetrahydropteroyltri-L-glutamate contacts are provided by residues 19–22 (RELK) and Lys119. L-homocysteine is bound by residues 418–420 (IGS) and Glu471. Residues 418 to 420 (IGS) and Glu471 each bind L-methionine. Residues 502-503 (RC) and Trp548 contribute to the 5-methyltetrahydropteroyltri-L-glutamate site. An L-homocysteine-binding site is contributed by Asp586. Asp586 is a binding site for L-methionine. Glu592 contributes to the 5-methyltetrahydropteroyltri-L-glutamate binding site. 3 residues coordinate Zn(2+): His628, Cys630, and Glu652. Catalysis depends on His681, which acts as the Proton donor. Residue Cys713 participates in Zn(2+) binding.

Belongs to the vitamin-B12 independent methionine synthase family. Zn(2+) is required as a cofactor.

The enzyme catalyses 5-methyltetrahydropteroyltri-L-glutamate + L-homocysteine = tetrahydropteroyltri-L-glutamate + L-methionine. It participates in amino-acid biosynthesis; L-methionine biosynthesis via de novo pathway; L-methionine from L-homocysteine (MetE route): step 1/1. Catalyzes the transfer of a methyl group from 5-methyltetrahydrofolate to homocysteine resulting in methionine formation. The chain is 5-methyltetrahydropteroyltriglutamate--homocysteine methyltransferase from Corynebacterium glutamicum (strain R).